Reading from the N-terminus, the 210-residue chain is Inner membrane-spanning protein YciB (210 aa).

6 helical membrane passes run 12–32, 53–73, 78–98, 115–135, 153–173, and 175–195; these read EVSPLLKLVLELGPLMVFFFA, IFIATGLFMAATAAALAVSWM, LPMMPLISGIVVFVFGALTLW, LFGAILLGGLLFGKSLLGYVF, WGVFFLFLAVLNEVIWRSFST, and FWVAFKVWGTMPITILFTLAQ.

Belongs to the YciB family.

It is found in the cell inner membrane. Its function is as follows. Plays a role in cell envelope biogenesis, maintenance of cell envelope integrity and membrane homeostasis. This Sinorhizobium medicae (strain WSM419) (Ensifer medicae) protein is Inner membrane-spanning protein YciB.